The sequence spans 738 residues: Ethylene receptor (738 aa).

3 consecutive transmembrane segments (helical) span residues 23 to 43, 54 to 74, and 92 to 112; these read ISDF…IYFV, VLVQ…INLW, and VLTA…IPDL. Cu cation is bound by residues Cys65 and His69. The GAF domain occupies 158–307; sequence DRHTILKTTL…VVADQVAVAL (150 aa). The Histidine kinase domain occupies 350 to 589; sequence VMNHEMRTPM…IFIVKLGFAE (240 aa). A Phosphohistidine; by autocatalysis modification is found at His353. The Response regulatory domain occupies 612–729; sequence PGLKVLVMDD…KMRSVLSELL (118 aa). Asp660 bears the 4-aspartylphosphate mark.

This sequence belongs to the ethylene receptor family. In terms of assembly, homodimer; disulfide-linked. It depends on Cu cation as a cofactor. In terms of processing, activation probably requires a transfer of a phosphate group between a His in the transmitter domain and an Asp of the receiver domain.

It is found in the endoplasmic reticulum membrane. It catalyses the reaction ATP + protein L-histidine = ADP + protein N-phospho-L-histidine.. Its function is as follows. May act early in the ethylene signal transduction pathway, possibly as an ethylene receptor, or as a regulator of the pathway. The polypeptide is Ethylene receptor (ETR1) (Prunus persica (Peach)).